The primary structure comprises 95 residues: Large ribosomal subunit protein uL23 (95 aa).

The protein belongs to the universal ribosomal protein uL23 family. In terms of assembly, part of the 50S ribosomal subunit. Contacts protein L29, and trigger factor when it is bound to the ribosome.

One of the early assembly proteins it binds 23S rRNA. One of the proteins that surrounds the polypeptide exit tunnel on the outside of the ribosome. Forms the main docking site for trigger factor binding to the ribosome. This Desulforudis audaxviator (strain MP104C) protein is Large ribosomal subunit protein uL23.